Here is a 387-residue protein sequence, read N- to C-terminus: Methylthioribose-1-phosphate isomerase (387 aa).

The Proton donor role is filled by Asp257.

Belongs to the eIF-2B alpha/beta/delta subunits family. MtnA subfamily.

The protein resides in the cytoplasm. It is found in the nucleus. It carries out the reaction 5-(methylsulfanyl)-alpha-D-ribose 1-phosphate = 5-(methylsulfanyl)-D-ribulose 1-phosphate. It functions in the pathway amino-acid biosynthesis; L-methionine biosynthesis via salvage pathway; L-methionine from S-methyl-5-thio-alpha-D-ribose 1-phosphate: step 1/6. In terms of biological role, catalyzes the interconversion of methylthioribose-1-phosphate (MTR-1-P) into methylthioribulose-1-phosphate (MTRu-1-P). This is Methylthioribose-1-phosphate isomerase (mri1) from Aspergillus fumigatus (strain CBS 144.89 / FGSC A1163 / CEA10) (Neosartorya fumigata).